The primary structure comprises 1083 residues: Error-prone DNA polymerase (1083 aa).

The protein belongs to the DNA polymerase type-C family. DnaE2 subfamily.

Its subcellular location is the cytoplasm. The enzyme catalyses DNA(n) + a 2'-deoxyribonucleoside 5'-triphosphate = DNA(n+1) + diphosphate. In terms of biological role, DNA polymerase involved in damage-induced mutagenesis and translesion synthesis (TLS). It is not the major replicative DNA polymerase. The chain is Error-prone DNA polymerase from Xanthomonas axonopodis pv. citri (strain 306).